Here is a 349-residue protein sequence, read N- to C-terminus: NADP-dependent alcohol dehydrogenase C 1 (349 aa).

Zn(2+)-binding residues include Cys41, His63, Cys94, Cys97, Cys100, Cys108, and Cys159. Lys210 is covalently cross-linked (Isoglutamyl lysine isopeptide (Lys-Gln) (interchain with Q-Cter in protein Pup)).

This sequence belongs to the zinc-containing alcohol dehydrogenase family. Requires Zn(2+) as cofactor.

The catalysed reaction is a primary alcohol + NADP(+) = an aldehyde + NADPH + H(+). Its function is as follows. Prefers aldehydes over alcohols. The sequence is that of NADP-dependent alcohol dehydrogenase C 1 (adhc1) from Mycolicibacterium smegmatis (strain ATCC 700084 / mc(2)155) (Mycobacterium smegmatis).